The following is a 740-amino-acid chain: Catalase-peroxidase (740 aa).

Residues 107 to 229 (WHAAGTYRIH…LAAVQMGLIY (123 aa)) constitute a cross-link (tryptophyl-tyrosyl-methioninium (Trp-Tyr) (with M-255)). His-108 (proton acceptor) is an active-site residue. A cross-link (tryptophyl-tyrosyl-methioninium (Tyr-Met) (with W-107)) is located at residues 229–255 (YVNPEGPNGNPDPMAAAVDIRETFRRM). His-270 contributes to the heme b binding site. The active-site Tryptophan radical intermediate is Trp-321.

Belongs to the peroxidase family. Peroxidase/catalase subfamily. In terms of assembly, homodimer. The cofactor is heme b. Post-translationally, formation of the three residue Trp-Tyr-Met cross-link is important for the catalase, but not the peroxidase activity of the enzyme.

The enzyme catalyses H2O2 + AH2 = A + 2 H2O. It carries out the reaction 2 H2O2 = O2 + 2 H2O. Functionally, bifunctional enzyme with both catalase and broad-spectrum peroxidase activity, oxidizing various electron donors including NADP(H). Protects M.tuberculosis against toxic reactive oxygen species (ROS) including hydrogen peroxide as well as organic peroxides and thus contributes to its survival within host macrophages by countering the phagocyte oxidative burst. Also displays efficient peroxynitritase activity, which may help the bacterium to persist in macrophages. Catalyzes the oxidative activation of the antitubercular pro-drug isoniazid (INH) to generate an isonicotinoyl radical that then reacts nonenzymatically with NAD to form an isonicotinoyl-NAD adduct which inhibits InhA. The polypeptide is Catalase-peroxidase (Mycobacterium tuberculosis (strain CDC 1551 / Oshkosh)).